The primary structure comprises 116 residues: Promotilin (116 aa).

Positions 1 to 25 (MVSRKAVAVLLMVHVAVMLASQTEA) are cleaved as a signal peptide. The disordered stretch occupies residues 39–74 (REKERNKGQKKSLIVQQRSEEVGPLDPVEPPEEEEN).

This sequence belongs to the motilin family.

It localises to the secreted. Functionally, plays an important role in the regulation of interdigestive gastrointestinal motility and indirectly causes rhythmic contraction of duodenal and colonic smooth muscle. In Felis catus (Cat), this protein is Promotilin (MLN).